Reading from the N-terminus, the 615-residue chain is Cilia- and flagella-associated protein 52 (615 aa).

WD repeat units follow at residues 54 to 98, 101 to 142, 145 to 184, 232 to 275, 320 to 359, 362 to 401, 405 to 444, 449 to 488, 490 to 529, 533 to 572, and 575 to 614; these read GHSD…LIHR, LHKV…AICG, CNTNFTNCVKFFNNSPDKLITAGNFNMNVWTYDAGNNKLR, GPAK…AGTK, AHNDKINGMAFPNEYSEVFATCGTGFIRLWHLTTCRELLR, VPNLECFCIAFTTDGSAILSGWSDGKIRAFGPQSGKIIFT, AHQKAVTAIASTADSSRILSGGEEGMVRVWRIGRTSQTLE, DHKGPVNCIRIKGSGDECVSASSDGSCILWDLHTFKRRTS, FANTFFKSVVYHPDESQLVTAGTDRKVTYWDAYDGNAIRI, SDLDEVNALAVDRDGEALVSGGGDKLVKLWGYDEGHCYFV, and AHSGAITAVGVTPDKQRIVSVGTEGGIFIWDYQRPQTLAD.

This sequence belongs to the CFAP52 family.

Its subcellular location is the cytoplasm. The protein resides in the cell projection. It is found in the cilium. The protein localises to the flagellum. Its function is as follows. May play a role in cell growth and/or survival. The protein is Cilia- and flagella-associated protein 52 of Chlamydomonas reinhardtii (Chlamydomonas smithii).